Consider the following 1400-residue polypeptide: DNA-directed RNA polymerase subunit beta' (1400 aa).

Residues Cys71, Cys73, Cys86, and Cys89 each coordinate Zn(2+). Residues Asp462, Asp464, and Asp466 each coordinate Mg(2+). Zn(2+)-binding residues include Cys810, Cys884, Cys891, and Cys894. Positions 1377–1400 (REKQATIVPPAAPEAEPLALPPVE) are disordered.

The protein belongs to the RNA polymerase beta' chain family. The RNAP catalytic core consists of 2 alpha, 1 beta, 1 beta' and 1 omega subunit. When a sigma factor is associated with the core the holoenzyme is formed, which can initiate transcription. Mg(2+) serves as cofactor. The cofactor is Zn(2+).

The enzyme catalyses RNA(n) + a ribonucleoside 5'-triphosphate = RNA(n+1) + diphosphate. In terms of biological role, DNA-dependent RNA polymerase catalyzes the transcription of DNA into RNA using the four ribonucleoside triphosphates as substrates. This chain is DNA-directed RNA polymerase subunit beta', found in Rhodopseudomonas palustris (strain HaA2).